The primary structure comprises 116 residues: Large ribosomal subunit protein uL18 (116 aa).

Belongs to the universal ribosomal protein uL18 family. Part of the 50S ribosomal subunit; part of the 5S rRNA/L5/L18/L25 subcomplex. Contacts the 5S and 23S rRNAs.

Its function is as follows. This is one of the proteins that bind and probably mediate the attachment of the 5S RNA into the large ribosomal subunit, where it forms part of the central protuberance. In Psychrobacter arcticus (strain DSM 17307 / VKM B-2377 / 273-4), this protein is Large ribosomal subunit protein uL18.